A 62-amino-acid polypeptide reads, in one-letter code: Large ribosomal subunit protein eL24 (62 aa).

The Zn(2+) site is built by C7, C10, C33, and C37. Residues 7–37 (CDYCGDDIEPGTGTMFVHNDGSTVHFCSAKC) form a C4-type zinc finger.

It belongs to the eukaryotic ribosomal protein eL24 family. Part of the 50S ribosomal subunit. Forms a cluster with proteins L3 and L14. Zn(2+) is required as a cofactor.

Binds to the 23S rRNA. This is Large ribosomal subunit protein eL24 from Halobacterium salinarum (strain ATCC 29341 / DSM 671 / R1).